Consider the following 396-residue polypeptide: Putative cystathionine beta-lyase (396 aa).

The residue at position 210 (Lys-210) is an N6-(pyridoxal phosphate)lysine.

This sequence belongs to the trans-sulfuration enzymes family. Pyridoxal 5'-phosphate is required as a cofactor.

It catalyses the reaction L,L-cystathionine + H2O = L-homocysteine + pyruvate + NH4(+). It carries out the reaction an S-substituted L-cysteine + H2O = a thiol + pyruvate + NH4(+). The protein operates within amino-acid biosynthesis; L-methionine biosynthesis via de novo pathway; L-homocysteine from L-cystathionine: step 1/1. Catalyzes the cleavage of cystathionine to homocysteine, pyruvate and ammonia during methionine biosynthesis. In Rhizobium johnstonii (strain DSM 114642 / LMG 32736 / 3841) (Rhizobium leguminosarum bv. viciae), this protein is Putative cystathionine beta-lyase (metC).